Here is a 266-residue protein sequence, read N- to C-terminus: NAD kinase 2 (266 aa).

Asp-51 serves as the catalytic Proton acceptor. Residues 51-52 (DG), 123-124 (NE), Arg-150, Asp-152, 163-168 (TGYSKS), and Ala-187 contribute to the NAD(+) site.

The protein belongs to the NAD kinase family. A divalent metal cation is required as a cofactor.

It is found in the cytoplasm. It catalyses the reaction NAD(+) + ATP = ADP + NADP(+) + H(+). Functionally, involved in the regulation of the intracellular balance of NAD and NADP, and is a key enzyme in the biosynthesis of NADP. Catalyzes specifically the phosphorylation on 2'-hydroxyl of the adenosine moiety of NAD to yield NADP. The polypeptide is NAD kinase 2 (Oceanobacillus iheyensis (strain DSM 14371 / CIP 107618 / JCM 11309 / KCTC 3954 / HTE831)).